Consider the following 589-residue polypeptide: BTB/POZ domain and ankyrin repeat-containing protein NPR3 (589 aa).

Residues 1-25 are disordered; it reads METSTISFSSSSPPSPPPPQPAPGD. Pro residues predominate over residues 13–22; sequence PPSPPPPQPA. One can recognise a BTB domain in the interval 52 to 137; it reads AEIVLASGGG…LYTGRLRSAP (86 aa). The C2HC NPR-type zinc finger occupies 140–154; the sequence is AAACLDDGCSHDACR. Residues Cys-143, Cys-148, His-150, and Cys-153 each coordinate Zn(2+). 3 ANK repeats span residues 260–290, 292–319, and 323–352; these read KRVRNIHKALDSDDVDLVGMLLKESPVTLDD, FAIHYAAAYCEPKVLAELLKLESANVNL, and SGYTPLHMACMRREPDIIVSLIEKGASVLE. The interval 382–521 is salicylic acid-binding core (SBC); the sequence is ERSKAYLCIG…LDKFLNEEST (140 aa). Arg-433 serves as a coordination point for salicylate. Residues 555-589 are disordered; it reads DKAAGAAISSSTSASSSPRYETKLRPGNKKGKLSR. Low complexity predominate over residues 558–571; it reads AGAAISSSTSASSS. The span at 580–589 shows a compositional bias: basic residues; sequence PGNKKGKLSR.

The protein belongs to the plant 'ANKYRIN-BTB/POZ' family. 'NPR1-like' subfamily. Interacts with TGA2.1, TGA2.2, TGA2.3, LG2, TGAL1, TGAL4, NRR, RH1, RH2 and RH3.

It is found in the nucleus. It participates in protein modification; protein ubiquitination. Its function is as follows. Salicylic acid (SA)-binding substrate-specific adapter of an E3 ubiquitin-protein ligase complex (CUL3-RBX1-BTB) which mediates the ubiquitination and subsequent proteasomal degradation of target proteins. Involved in defense response against the bacterial blight disease caused by Xanthomonas oryzae pv. oryzae (Xoo). Plants expressing an NPR3/NH3 transgene driven by its native promoter show enhanced resistance to the Xoo pathogen, and exhibit elevated sensitivity to benzothiadiazole (BTH) treatment and enhanced induction of defense-related genes upon treatment with BTH. Intriguingly, constitutive over-expression of NPR3/NH3 with a ubiquitin promoter does not confer disease resistance to Xoo. The sequence is that of BTB/POZ domain and ankyrin repeat-containing protein NPR3 from Oryza sativa subsp. japonica (Rice).